The chain runs to 1338 residues: Insulin receptor substrate 2 (1338 aa).

Positions 1-12 are enriched in pro residues; sequence MASPPRHGPPGP. Disordered regions lie at residues 1–31 and 49–72; these read MASP…NHSV and VLRG…QPPR. One can recognise a PH domain in the interval 16 to 144; sequence DGPNLNNNNN…WYRALTDLVS (129 aa). Over residues 19–28 the composition is skewed to low complexity; it reads NLNNNNNNNN. Positions 53 to 66 are enriched in gly residues; it reads PGAGGDEATAGGGS. Residues 194–298 enclose the IRS-type PTB domain; it reads YREVWQVNLK…EAMKALKELF (105 aa). The tract at residues 303-411 is disordered; sequence RSKSQSSGSS…SHTLSGGCGG (109 aa). Residues S306 and S346 each carry the phosphoserine modification. T350 bears the Phosphothreonine mark. Phosphoserine occurs at positions 365, 384, 388, and 391. The residue at position 412 (R412) is an Omega-N-methylarginine. The segment at 428 to 537 is disordered; the sequence is SRSMSMPVAH…PPARDGGGGG (110 aa). The span at 444 to 453 shows a compositional bias: low complexity; the sequence is SPGSLSSSSG. Pro residues predominate over residues 459–471; it reads YPPPPGPHPPLPH. A compositionally biased stretch (low complexity) spans 475–493; that stretch reads HGPGQRPSSGSASASGSPS. T520 carries the post-translational modification Phosphothreonine. S523 bears the Phosphoserine mark. T527 is subject to Phosphothreonine. Y540 is modified (phosphotyrosine; by INSR). The YXXM motif 1 signature appears at 540 to 543; it reads YGYM. The residue at position 560 (S560) is a Phosphoserine; by PLK1. At S577 the chain carries Phosphoserine. A phosphothreonine mark is found at T579 and T580. S594 is modified (phosphoserine). The YXXM motif 2 signature appears at 598-601; sequence YTLM. Phosphoserine is present on residues S608 and S620. Phosphotyrosine; by INSR occurs at positions 653 and 675. 2 consecutive short sequence motifs (YXXM motif) follow at residues 653-656 and 675-678; these read YMPM. A phosphoserine mark is found at S679 and S682. The segment covering 703–719 has biased composition (low complexity); that stretch reads PSAGPAGPAPTSAAGRT. A disordered region spans residues 703-739; that stretch reads PSAGPAGPAPTSAAGRTFPASGGGYKASSPAESSPED. Phosphoserine occurs at positions 735 and 736. The YXXM motif 5 signature appears at 742-745; it reads YMRM. The residue at position 770 (S770) is a Phosphoserine. T779 is subject to Phosphothreonine. S805 is modified (phosphoserine). A YXXM motif 6 motif is present at residues 823 to 826; that stretch reads YVLM. S828 is modified (phosphoserine). A disordered region spans residues 840-1101; the sequence is EPQATPGPSQ…KPEAARVASP (262 aa). Over residues 859 to 870 the composition is skewed to pro residues; the sequence is TQPPHPVVPSPV. S915 is modified (phosphoserine). Y919 is modified (phosphotyrosine; by INSR). The span at 938–967 shows a compositional bias: low complexity; the sequence is LLASAASSSSLLSASSPASSLGSGTPGTSS. A Phosphoserine modification is found at S973. Y978 carries the phosphotyrosine; by INSR modification. Residues 1013-1022 are compositionally biased toward pro residues; the sequence is PYPPLPPRPS. Residues 1072 to 1075 carry the YXXM motif 7 motif; it reads YTEM. Residue T1082 is modified to Phosphothreonine. The span at 1083-1093 shows a compositional bias: pro residues; the sequence is PPQPIAAPPKP. The residue at position 1100 (S1100) is a Phosphoserine. S1109 is subject to Phosphoserine; by PLK1. Residues 1121-1296 are disordered; it reads LQASQPPDPH…TRSLGGLISA (176 aa). Residues 1150–1165 show a composition bias toward low complexity; sequence ETFSSTTTVTPVSPSF. T1159 carries the phosphothreonine modification. Phosphoserine is present on residues S1162, S1174, S1176, and S1186. A compositionally biased stretch (polar residues) spans 1174–1183; that stretch reads SASVENVSLR. The span at 1188–1198 shows a compositional bias: gly residues; sequence GGVGVGPGGGD. S1203 carries the phosphoserine modification. A compositionally biased stretch (gly residues) spans 1224–1236; that stretch reads QPGGLVGCPGSGG. Y1253 bears the Phosphotyrosine; by INSR mark. The segment covering 1263 to 1277 has biased composition (pro residues); the sequence is GLPPQPQPPPPPLPQ. K1331 is covalently cross-linked (Glycyl lysine isopeptide (Lys-Gly) (interchain with G-Cter in ubiquitin)).

Interacts with PHIP. Interacts with SH2B1; this interaction enhances leptin-induced activation of the PI3-kinase pathway. Interacts with GRB2. Interacts with PIK3R1. Interacts with DVL2; this interaction promotes the Wnt/beta-catenin signaling pathway. In terms of processing, phosphorylation fluctuates in a cell-cycle dependent manner with hyperphosphorylation during mitosis. Phosphorylated at Ser-560 and Ser-1109 by PLK1; these phosphorylations prevent the activation of the PI3K pathway upon growth factor stimulation by inhibiting the binding between IRS2 and the PI3K pathway components and increasing the level of IRS2 protein degradation. In addition, they prevent premature mitotic exit. Post-translationally, monoubiquitinated by NEDD4; leading to enhanced IGF1 signaling. During cell cycle, ubiquitination and proteasomal degradation are controlled by FZR1.

The protein localises to the cytoplasm. The protein resides in the cytosol. Signaling adapter protein that participates in the signal transduction from two prominent receptor tyrosine kinases, insulin receptor/INSR and insulin-like growth factor I receptor/IGF1R. Plays therefore an important role in development, growth, glucose homeostasis as well as lipid metabolism. Upon phosphorylation by the insulin receptor, functions as a signaling scaffold that propagates insulin action through binding to SH2 domain-containing proteins including the p85 regulatory subunit of PI3K, NCK1, NCK2, GRB2 or SHP2. Recruitment of GRB2 leads to the activation of the guanine nucleotide exchange factor SOS1 which in turn triggers the Ras/Raf/MEK/MAPK signaling cascade. Activation of the PI3K/AKT pathway is responsible for most of insulin metabolic effects in the cell, and the Ras/Raf/MEK/MAPK is involved in the regulation of gene expression and in cooperation with the PI3K pathway regulates cell growth and differentiation. Acts a positive regulator of the Wnt/beta-catenin signaling pathway through suppression of DVL2 autophagy-mediated degradation leading to cell proliferation. Plays a role in cell cycle progression by promoting a robust spindle assembly checkpoint (SAC) during M-phase. In macrophages, IL4-induced tyrosine phosphorylation of IRS2 leads to the recruitment and activation of phosphoinositide 3-kinase (PI3K). This is Insulin receptor substrate 2 (IRS2) from Homo sapiens (Human).